The primary structure comprises 883 residues: MASNLLRFPLPPPSSLHIRPSKFLVNRCFPRLRRSRIRRHCSRPFFLVSNSVEISTQSFESTESSIESVKSITSDTPILLDVSGMMCGGCVARVKSVLMSDDRVASAVVNMLTETAAVKFKPEVEVTADTAESLAKRLTESGFEAKRRVSGMGVAENVKKWKEMVSKKEDLLVKSRNRVAFAWTLVALCCGSHTSHILHSLGIHIAHGGIWDLLHNSYVKGGLAVGALLGPGRELLFDGIKAFGKRSPNMNSLVGLGSMAAFSISLISLVNPELEWDASFFDEPVMLLGFVLLGRSLEERAKLQASTDMNELLSLISTQSRLVITSSDNNTPVDSVLSSDSICINVSVDDIRVGDSLLVLPGETFPVDGSVLAGRSVVDESMLTGESLPVFKEEGCSVSAGTINWDGPLRIKASSTGSNSTISKIVRMVEDAQGNAAPVQRLADAIAGPFVYTIMSLSAMTFAFWYYVGSHIFPDVLLNDIAGPDGDALALSLKLAVDVLVVSCPCALGLATPTAILIGTSLGAKRGYLIRGGDVLERLASIDCVALDKTGTLTEGRPVVSGVASLGYEEQEVLKMAAAVEKTATHPIAKAIVNEAESLNLKTPETRGQLTEPGFGTLAEIDGRFVAVGSLEWVSDRFLKKNDSSDMVKLESLLDHKLSNTSSTSRYSKTVVYVGREGEGIIGAIAISDCLRQDAEFTVARLQEKGIKTVLLSGDREGAVATVAKNVGIKSESTNYSLSPEKKFEFISNLQSSGHRVAMVGDGINDAPSLAQADVGIALKIEAQENAASNAASVILVRNKLSHVVDALSLAQATMSKVYQNLAWAIAYNVISIPIAAGVLLPQYDFAMTPSLSGGLMALSSIFVVSNSLLLQLHKSETSKNSL.

A chloroplast-targeting transit peptide spans 1-65 (MASNLLRFPL…TQSFESTESS (65 aa)). Residues 76–146 (TPILLDVSGM…RLTESGFEAK (71 aa)) enclose the HMA domain. Residues cysteine 87 and cysteine 90 each coordinate Cu cation. 6 helical membrane-spanning segments follow: residues 179–199 (VAFA…HILH), 209–229 (GIWD…GALL), 250–270 (MNSL…ISLV), 274–294 (LEWD…VLLG), 445–465 (AIAG…FAFW), and 499–519 (VLVV…ILIG). Aspartate 548 (4-aspartylphosphate intermediate) is an active-site residue. Position 761–768 (761–768 (GDGINDAP)) interacts with ATP. Positions 762 and 766 each coordinate Mg(2+). The next 2 membrane-spanning stretches (helical) occupy residues 822–842 (LAWA…VLLP) and 846–866 (FAMT…FVVS).

The protein belongs to the cation transport ATPase (P-type) (TC 3.A.3) family. Type IB subfamily. Expressed in the shoots only and not in the roots.

The protein resides in the plastid. It localises to the chloroplast thylakoid membrane. The enzyme catalyses Cu(2+)(in) + ATP + H2O = Cu(2+)(out) + ADP + phosphate + H(+). Its function is as follows. Mediates copper transfer across the chloroplast thylakoid membrane. Required for copper delivery into the thylakoids lumen, which is essential for the function of copper proteins. The chain is Copper-transporting ATPase PAA2, chloroplastic (PAA2) from Arabidopsis thaliana (Mouse-ear cress).